We begin with the raw amino-acid sequence, 83 residues long: Small ribosomal subunit protein bS16 (83 aa).

This sequence belongs to the bacterial ribosomal protein bS16 family.

The polypeptide is Small ribosomal subunit protein bS16 (Borrelia duttonii (strain Ly)).